Reading from the N-terminus, the 206-residue chain is Protein Nef (206 aa).

Gly-2 is lipidated: N-myristoyl glycine; by host. Phosphoserine; by host is present on Ser-6. Residues 62–65 (EEEE) are acidic; interacts with host PACS1 and PACS2; stabilizes the interaction of NEF/MHC-I with host AP1M1; necessary for MHC-I internalization. An SH3-binding; interaction with Src family tyrosine kinases region spans residues 69–78 (PVTPQVPLRP). Positions 72–75 (PQVP) match the PxxP; stabilizes the interaction of NEF/MHC-I with host AP1M1; necessary for MHC-I internalization motif. Residues 108–124 (DILDLWIYHTQGYFPDW) are mediates dimerization, Nef-PTE1 interaction. The segment at 148–180 (VEPDKIEEANKGENTSLLHPVSLHGMDDPEREV) is binding to ATP6V1H. The Dileucine internalization motif; necessary for CD4 internalization motif lies at 164 to 165 (LL). The short motif at 174–175 (DD) is the Diacidic; necessary for CD4 internalization element.

The protein belongs to the lentivirus primate group Nef protein family. Monomer; cytosolic form. Homodimer; membrane bound form. Interacts with Nef associated p21-activated kinase (PAK2); this interaction activates PAK2. Associates with the Nef-MHC-I-AP1 complex; this complex is required for MHC-I internalization. Interacts (via C-terminus) with host PI3-kinase. Interacts with host PACS1; this interaction seems to be weak. Interacts with host PACS2. Interacts with host LCK and MAPK3; these interactions inhibit the kinase activity of the latter. Interacts with host ATP6V1H; this interaction may play a role in CD4 endocytosis. Associates with the CD4-Nef-AP2 complex; this complex is required for CD4 internalization. Interacts with host AP2 subunit alpha and AP2 subunit sigma2. Interacts with TCR-zeta chain; this interaction up-regulates the Fas ligand (FasL) surface expression. Interacts with host HCK, LYN, and SRC; these interactions activate the Src family kinases. Interacts with MAP3K5; this interaction inhibits the Fas and TNFR-mediated death signals. Interacts with beta-COP and PTE1. Interacts with human RACK1; this increases Nef phosphorylation by PKC. Interacts with TP53; this interaction decreases the half-life of TP53, protecting the infected cell against p53-mediated apoptosis. In terms of processing, phosphorylated on serine residues, probably by host PKCdelta and theta. Myristoylated. Post-translationally, the virion-associated Nef proteins are cleaved by the viral protease to release the soluble C-terminal core protein. Nef is probably cleaved concomitantly with viral structural proteins on maturation of virus particles.

Its subcellular location is the host cell membrane. The protein localises to the virion. It localises to the secreted. It is found in the host Golgi apparatus membrane. Its function is as follows. Factor of infectivity and pathogenicity, required for optimal virus replication. Alters numerous pathways of T-lymphocyte function and down-regulates immunity surface molecules in order to evade host defense and increase viral infectivity. Alters the functionality of other immunity cells, like dendritic cells, monocytes/macrophages and NK cells. Functionally, in infected CD4(+) T-lymphocytes, down-regulates the surface MHC-I, mature MHC-II, CD4, CD28, CCR5 and CXCR4 molecules. Mediates internalization and degradation of host CD4 through the interaction of with the cytoplasmic tail of CD4, the recruitment of AP-2 (clathrin adapter protein complex 2), internalization through clathrin coated pits, and subsequent transport to endosomes and lysosomes for degradation. Diverts host MHC-I molecules to the trans-Golgi network-associated endosomal compartments by an endocytic pathway to finally target them for degradation. MHC-I down-regulation may involve AP-1 (clathrin adapter protein complex 1) or possibly Src family kinase-ZAP70/Syk-PI3K cascade recruited by PACS2. In consequence infected cells are masked for immune recognition by cytotoxic T-lymphocytes. Decreasing the number of immune receptors also prevents reinfection by more HIV particles (superinfection). Down-regulates host SERINC3 and SERINC5 thereby excluding these proteins from the viral particles. Virion infectivity is drastically higher when SERINC3 or SERINC5 are excluded from the viral envelope, because these host antiviral proteins impair the membrane fusion event necessary for subsequent virion penetration. Bypasses host T-cell signaling by inducing a transcriptional program nearly identical to that of anti-CD3 cell activation. Interaction with TCR-zeta chain up-regulates the Fas ligand (FasL). Increasing surface FasL molecules and decreasing surface MHC-I molecules on infected CD4(+) cells send attacking cytotoxic CD8+ T-lymphocytes into apoptosis. In terms of biological role, plays a role in optimizing the host cell environment for viral replication without causing cell death by apoptosis. Protects the infected cells from apoptosis in order to keep them alive until the next virus generation is ready to strike. Inhibits the Fas and TNFR-mediated death signals by blocking MAP3K5/ASK1. Decreases the half-life of TP53, protecting the infected cell against p53-mediated apoptosis. Inhibits the apoptotic signals regulated by the Bcl-2 family proteins through the formation of a Nef/PI3-kinase/PAK2 complex that leads to activation of PAK2 and induces phosphorylation of Bad. Its function is as follows. Extracellular Nef protein targets CD4(+) T-lymphocytes for apoptosis by interacting with CXCR4 surface receptors. This Human immunodeficiency virus type 1 group M subtype B (isolate HXB2) (HIV-1) protein is Protein Nef.